The following is a 407-amino-acid chain: Peptidase T (407 aa).

H82 contacts Zn(2+). The active site involves D84. D143 contributes to the Zn(2+) binding site. E177 serves as the catalytic Proton acceptor. 3 residues coordinate Zn(2+): E178, D200, and H382.

Belongs to the peptidase M20B family. Zn(2+) is required as a cofactor.

Its subcellular location is the cytoplasm. It catalyses the reaction Release of the N-terminal residue from a tripeptide.. Its function is as follows. Cleaves the N-terminal amino acid of tripeptides. The protein is Peptidase T of Streptococcus pyogenes serotype M6 (strain ATCC BAA-946 / MGAS10394).